The primary structure comprises 486 residues: Kynureninase 1 (486 aa).

The interval 53–72 (DLKRTTLDPNQEPEHSPTPS) is disordered. Residues Leu-146, Thr-147, 174–177 (FPSD), Ser-231, Asp-260, His-263, and Tyr-285 contribute to the pyridoxal 5'-phosphate site. Residue Lys-286 is modified to N6-(pyridoxal phosphate)lysine. The pyridoxal 5'-phosphate site is built by Trp-326 and Asn-354.

The protein belongs to the kynureninase family. In terms of assembly, homodimer. The cofactor is pyridoxal 5'-phosphate.

It localises to the cytoplasm. The enzyme catalyses L-kynurenine + H2O = anthranilate + L-alanine + H(+). It catalyses the reaction 3-hydroxy-L-kynurenine + H2O = 3-hydroxyanthranilate + L-alanine + H(+). Its pathway is amino-acid degradation; L-kynurenine degradation; L-alanine and anthranilate from L-kynurenine: step 1/1. The protein operates within cofactor biosynthesis; NAD(+) biosynthesis; quinolinate from L-kynurenine: step 2/3. In terms of biological role, catalyzes the cleavage of L-kynurenine (L-Kyn) and L-3-hydroxykynurenine (L-3OHKyn) into anthranilic acid (AA) and 3-hydroxyanthranilic acid (3-OHAA), respectively. In Aspergillus clavatus (strain ATCC 1007 / CBS 513.65 / DSM 816 / NCTC 3887 / NRRL 1 / QM 1276 / 107), this protein is Kynureninase 1 (bna5-1).